The following is a 40-amino-acid chain: Dolichyl-diphosphooligosaccharide--protein glycosyltransferase subunit 4 (40 aa).

Residues Met1 to Asp4 are Lumenal-facing. A helical membrane pass occupies residues Val5–Tyr25. Residues His26 to Lys40 lie on the Cytoplasmic side of the membrane.

This sequence belongs to the OST4 family. Component of the oligosaccharyltransferase (OST) complex.

It is found in the endoplasmic reticulum membrane. In terms of biological role, subunit of the oligosaccharyl transferase (OST) complex that catalyzes the initial transfer of a defined glycan (Glc(3)Man(9)GlcNAc(2) in eukaryotes) from the lipid carrier dolichol-pyrophosphate to an asparagine residue within an Asn-X-Ser/Thr consensus motif in nascent polypeptide chains, the first step in protein N-glycosylation. N-glycosylation occurs cotranslationally and the complex associates with the Sec61 complex at the channel-forming translocon complex that mediates protein translocation across the endoplasmic reticulum (ER). All subunits are required for a maximal enzyme activity. In Drosophila grimshawi (Hawaiian fruit fly), this protein is Dolichyl-diphosphooligosaccharide--protein glycosyltransferase subunit 4.